Consider the following 530-residue polypeptide: ATP synthase subunit alpha 3 (530 aa).

Residue 174–181 coordinates ATP; the sequence is GDRATGKT. A compositionally biased stretch (low complexity) spans 507–522; it reads TASATAPPDPPAASAA. A disordered region spans residues 507-530; it reads TASATAPPDPPAASAAELPQPDSP.

Belongs to the ATPase alpha/beta chains family. As to quaternary structure, F-type ATPases have 2 components, CF(1) - the catalytic core - and CF(0) - the membrane proton channel. CF(1) has five subunits: alpha(3), beta(3), gamma(1), delta(1), epsilon(1). CF(0) has three main subunits: a(1), b(2) and c(9-12). The alpha and beta chains form an alternating ring which encloses part of the gamma chain. CF(1) is attached to CF(0) by a central stalk formed by the gamma and epsilon chains, while a peripheral stalk is formed by the delta and b chains.

The protein resides in the cell inner membrane. It catalyses the reaction ATP + H2O + 4 H(+)(in) = ADP + phosphate + 5 H(+)(out). Its function is as follows. Produces ATP from ADP in the presence of a proton gradient across the membrane. The alpha chain is a regulatory subunit. The protein is ATP synthase subunit alpha 3 of Paraburkholderia xenovorans (strain LB400).